The following is a 194-amino-acid chain: MAASLVGKKIVFVTGNAKKLEEVVQILGDKFPCTLVAQKIDLPEYQGEPDEISIQKCQEAVRQVQGPVLVEDTCLCFNALGGLPGPYIKWFLEKLKPEGLHQLLAGFEDKSAYALCTFALSTGDPSQPVRLFRGRTSGRIVAPRGCQDFGWDPCFQPDGYEQTYAEMPKAEKNAVSHRFRALLELQEYFGSLAA.

Ala-2 carries the post-translational modification N-acetylalanine. 14 to 19 (TGNAKK) is an ITP binding site. Glu-44 contacts Mg(2+). Residues Lys-56, 72 to 73 (DT), Lys-89, 149 to 152 (FGWD), Lys-172, and 177 to 178 (HR) contribute to the ITP site.

It belongs to the HAM1 NTPase family. In terms of assembly, homodimer. Mg(2+) serves as cofactor. As to expression, ubiquitous. Highly expressed in heart, liver, sex glands, thyroid and adrenal gland.

It is found in the cytoplasm. The catalysed reaction is ITP + H2O = IMP + diphosphate + H(+). It carries out the reaction dITP + H2O = dIMP + diphosphate + H(+). The enzyme catalyses XTP + H2O = XMP + diphosphate + H(+). It catalyses the reaction N(6)-hydroxy-dATP + H2O = N(6)-hydroxy-dAMP + diphosphate + H(+). Functionally, pyrophosphatase that hydrolyzes the non-canonical purine nucleotides inosine triphosphate (ITP), deoxyinosine triphosphate (dITP) as well as 2'-deoxy-N-6-hydroxylaminopurine triphosphate (dHAPTP) and xanthosine 5'-triphosphate (XTP) to their respective monophosphate derivatives. The enzyme does not distinguish between the deoxy- and ribose forms. Probably excludes non-canonical purines from RNA and DNA precursor pools, thus preventing their incorporation into RNA and DNA and avoiding chromosomal lesions. The chain is Inosine triphosphate pyrophosphatase from Homo sapiens (Human).